A 327-amino-acid polypeptide reads, in one-letter code: Probable cell division protein WhiA (327 aa).

The segment at residues 275–308 (SLEELGRLADPPMTKDAVAGRIRRLLSMADRKAK) is a DNA-binding region (H-T-H motif).

Belongs to the WhiA family.

Involved in cell division and chromosome segregation. The chain is Probable cell division protein WhiA from Mycobacterium avium (strain 104).